We begin with the raw amino-acid sequence, 495 residues long: Transmembrane protein 161A (495 aa).

The first 28 residues, 1-28, serve as a signal peptide directing secretion; that stretch reads MALMGVQLVVSLLAVSIMQRMAPHLSFA. Residues 29-99 are Extracellular-facing; it reads RWLLCNGSLL…VNVMDALVLR (71 aa). An N-linked (GlcNAc...) asparagine glycan is attached at N34. A helical transmembrane segment spans residues 100–120; that stretch reads FFVEYQWLIDFAVYATGIYLF. Residues 121–135 lie on the Cytoplasmic side of the membrane; that stretch reads TEGYYSVVDASKEVN. The helical transmembrane segment at 136–156 threads the bilayer; it reads IASIWCVLTVLFCLRTLYLLM. The Extracellular portion of the chain corresponds to 157–167; the sequence is SHYFLSEEGGE. The chain crosses the membrane as a helical span at residues 168–188; that stretch reads RSVCLAFGFLSLLIAMLVLVV. The Cytoplasmic segment spans residues 189–227; that stretch reads REDYLEFGLEPGFTSLFDNFEVFARKQGYEWSVPFTKLS. A helical transmembrane segment spans residues 228-248; sequence VKLGLAVICAFIGALLAFPGL. Residues 249–265 are Extracellular-facing; that stretch reads RLAQTHLDAVQMNADRP. Residues 266–286 form a helical membrane-spanning segment; sequence MIQILLHMSFLSPLVIIVMWI. Residues 287 to 305 lie on the Cytoplasmic side of the membrane; the sequence is KPIARDFLGNAPMGKTSVT. Residues 306–326 form a helical membrane-spanning segment; the sequence is LLSSSAFSSVRLWTIVVLCVL. Topologically, residues 327–367 are extracellular; it reads RLLLTRYHLQAYLNLAQKWVEQMKKEAGRIAAIDIQRKVTR. A helical transmembrane segment spans residues 368 to 388; it reads IFCYLTVVTLQYLIPILLVLF. The Cytoplasmic segment spans residues 389 to 465; the sequence is STLALKSLGD…ALLTPIFFRG (77 aa). A helical membrane pass occupies residues 466-486; it reads IFAFLTWWVAACQLISSLFGI. The Extracellular portion of the chain corresponds to 487–495; sequence YFHQYLMHN.

Belongs to the TMEM161 family.

The protein resides in the membrane. Functionally, may play a role in protection against oxidative stress. This chain is Transmembrane protein 161A (tmem161a), found in Danio rerio (Zebrafish).